The sequence spans 161 residues: MYLNATILGQVIAFILFVWFCMKYVWNPLMSVIEERQKKIIDSLESIKTSKMESERIRNEALACLKQAHIKSEEIIKYAYECKMQILHTAQNEAYQERDKILSQTQIQIDQERERIISELRNHVSKLVIESTEKVIDTSINKIIDYDFVDKIIKQLSNYED.

The chain crosses the membrane as a helical span at residues 1 to 21 (MYLNATILGQVIAFILFVWFC).

It belongs to the ATPase B chain family. As to quaternary structure, F-type ATPases have 2 components, F(1) - the catalytic core - and F(0) - the membrane proton channel. F(1) has five subunits: alpha(3), beta(3), gamma(1), delta(1), epsilon(1). F(0) has three main subunits: a(1), b(2) and c(10-14). The alpha and beta chains form an alternating ring which encloses part of the gamma chain. F(1) is attached to F(0) by a central stalk formed by the gamma and epsilon chains, while a peripheral stalk is formed by the delta and b chains.

The protein localises to the cell inner membrane. Its function is as follows. F(1)F(0) ATP synthase produces ATP from ADP in the presence of a proton or sodium gradient. F-type ATPases consist of two structural domains, F(1) containing the extramembraneous catalytic core and F(0) containing the membrane proton channel, linked together by a central stalk and a peripheral stalk. During catalysis, ATP synthesis in the catalytic domain of F(1) is coupled via a rotary mechanism of the central stalk subunits to proton translocation. Functionally, component of the F(0) channel, it forms part of the peripheral stalk, linking F(1) to F(0). The sequence is that of ATP synthase subunit b from Blochmanniella floridana.